Reading from the N-terminus, the 720-residue chain is Secreted RxLR effector protein 138 (720 aa).

A signal peptide spans 1–20; that stretch reads MRSAFYVAIVLLVAAGSQTA. The RxLR-dEER motif lies at 56-71; that stretch reads RNLKDDFMFSAGDEER. A disordered region spans residues 264 to 335; it reads ESNTRKRNNV…VAPPEPSRLD (72 aa). Basic and acidic residues predominate over residues 320-335; it reads KQHDHRVAPPEPSRLD. A glycan (N-linked (GlcNAc...) asparagine) is linked at N609.

It belongs to the RxLR effector family.

Its subcellular location is the secreted. The protein localises to the host nucleus. Its function is as follows. Secreted effector that acts as an elicitor that induces cell death in host plant cells. This is Secreted RxLR effector protein 138 from Plasmopara viticola (Downy mildew of grapevine).